The sequence spans 55 residues: Large ribosomal subunit protein bL33 (55 aa).

This sequence belongs to the bacterial ribosomal protein bL33 family.

The polypeptide is Large ribosomal subunit protein bL33 (Buchnera aphidicola subsp. Acyrthosiphon pisum (strain 5A)).